The primary structure comprises 480 residues: Ochratoxinase (480 aa).

His111, His113, Lys246, His287, and His307 together coordinate Zn(2+). The active site involves Lys246. Asp378 is an active-site residue.

The protein belongs to the metallo-dependent hydrolases superfamily. Ochratoxinase amidase 2 family. As to quaternary structure, homooctamer. It depends on Zn(2+) as a cofactor.

It localises to the secreted. It carries out the reaction ochratoxin A + H2O = ochratoxin alpha + L-phenylalanine. The Zn(2+)-specific chelator 1,10-phenanthroline inhibits the enzyme activity. Its function is as follows. Carboxypeptidase that catalyzes the release of a C-terminal amino acid with specific catalytic activity for aromatic amino acids such as phenylalanine. Is able to degrade ochratoxin A, one of the five major mycotoxins most harmful to humans and animals that is produced by Aspergillus and Penicillium species and occurs in a wide range of agricultural products. The sequence is that of Ochratoxinase from Aspergillus niger (strain ATCC 1015 / CBS 113.46 / FGSC A1144 / LSHB Ac4 / NCTC 3858a / NRRL 328 / USDA 3528.7).